The following is a 557-amino-acid chain: MSDNQRSRAITQGAERTPNRAMLRAVGFSDNDFDKPIVGVANGFSTITPCNKGLNELALAAEQALKQAAAMPQMFGTITVSDGISMGTEGMKYSLVSREVIADSIETAVQAESMDGVIAIGGCDKNMPGAMIAIARMNVPAIFVYGGTIKPGHYKGKDLTIVSAFEAVGQYTSHKIDAKELLEVERHACPGAGSCGGMFTANTMSSAFEAMGMSLPYSSTMAAEDGEKLTSAARSAEVLVDAIRKQIRPRDIITRKSIENAIAVIMAVGGSTNAVLHFLAIAHAAEVTLTIDDFERMRGKVPVLCDLKPSGRYVATDLHKAGGIPQVMKMLLDHGLLHGDCITISGQTIAEILKDVPSEPREDQDVIRQWDNPLYVQGHLAILKGNLAPEGCVAKITGVKSPKITGPARVFDSEEACMAAILAREIQPGDVVVIRYEGPKGGPGMREMLSPTSALIGEGLGDSVGLITDGRFSGGTYGMVVGHVAPEAFVGGTIALVREGDSITIDAEQRLLQLNIPGDELARRRAEWQPPHPRYTRGVLAKYSKLVSSASRGAITD.

Cys-50 lines the [2Fe-2S] cluster pocket. Asp-82 contacts Mg(2+). Cys-123 is a binding site for [2Fe-2S] cluster. Residues Asp-124 and Lys-125 each contribute to the Mg(2+) site. At Lys-125 the chain carries N6-carboxylysine. Cys-195 contributes to the [2Fe-2S] cluster binding site. Glu-447 is a Mg(2+) binding site. The active-site Proton acceptor is Ser-473.

This sequence belongs to the IlvD/Edd family. As to quaternary structure, homodimer. The cofactor is [2Fe-2S] cluster. It depends on Mg(2+) as a cofactor.

It carries out the reaction (2R)-2,3-dihydroxy-3-methylbutanoate = 3-methyl-2-oxobutanoate + H2O. The catalysed reaction is (2R,3R)-2,3-dihydroxy-3-methylpentanoate = (S)-3-methyl-2-oxopentanoate + H2O. Its pathway is amino-acid biosynthesis; L-isoleucine biosynthesis; L-isoleucine from 2-oxobutanoate: step 3/4. The protein operates within amino-acid biosynthesis; L-valine biosynthesis; L-valine from pyruvate: step 3/4. Functionally, functions in the biosynthesis of branched-chain amino acids. Catalyzes the dehydration of (2R,3R)-2,3-dihydroxy-3-methylpentanoate (2,3-dihydroxy-3-methylvalerate) into 2-oxo-3-methylpentanoate (2-oxo-3-methylvalerate) and of (2R)-2,3-dihydroxy-3-methylbutanoate (2,3-dihydroxyisovalerate) into 2-oxo-3-methylbutanoate (2-oxoisovalerate), the penultimate precursor to L-isoleucine and L-valine, respectively. This chain is Dihydroxy-acid dehydratase, found in Nitrosospira multiformis (strain ATCC 25196 / NCIMB 11849 / C 71).